We begin with the raw amino-acid sequence, 1669 residues long: Collagen alpha-1(IV) chain (1669 aa).

An N-terminal signal peptide occupies residues 1–27; the sequence is MGPRLSVWLLLLFAALLLHEERSRAAA. Residues 28-172 constitute a propeptide, N-terminal propeptide (7S domain); it reads KGDCGGSGCG…LGHVPGTLLK (145 aa). Residues 47 to 1443 form a disordered region; the sequence is QKGERGLPGL…MGPPGTPSVD (1397 aa). A compositionally biased stretch (low complexity) spans 92 to 104; it reads TRGPPGAAGYPGN. Asn126 carries an N-linked (GlcNAc...) asparagine glycan. Positions 173-1440 are triple-helical region; the sequence is GERGFPGIPG…PGSMGPPGTP (1268 aa). Residues 196–214 show a composition bias toward pro residues; it reads VGPPGFTGPPGPPGPPGPP. 3-hydroxyproline is present on residues Pro204, Pro207, and Pro210. Low complexity predominate over residues 234–247; the sequence is QGVSGPPGVPGQAQ. Over residues 289 to 298 the composition is skewed to basic and acidic residues; it reads PGKDGEKGER. A compositionally biased stretch (pro residues) spans 367-376; that stretch reads PGQPGPPGFP. Residues 377–387 show a composition bias toward low complexity; it reads TPGQAGAPGFP. Pro residues-rich tracts occupy residues 413–424 and 436–448; these read PGPPGPPGPPGQ and PGPP…PGTP. A compositionally biased stretch (low complexity) spans 485–494; it reads PGEIGFPGQP. Composition is skewed to basic and acidic residues over residues 497-508 and 535-545; these read KGDRGLPGRDGL and FDMRLKGDKGD. Residues 586 to 595 are compositionally biased toward gly residues; that stretch reads GPPGGVGFPG. 3-hydroxyproline occurs at positions 587 and 602. 4-hydroxyproline is present on Pro603. Pro605 is modified (3-hydroxyproline). Pro606 carries the post-translational modification 4-hydroxyproline. Over residues 611–620 the composition is skewed to low complexity; it reads IGPVGEKGQA. The segment covering 621-630 has biased composition (gly residues); that stretch reads GFPGGPGSPG. A 4-hydroxyproline mark is found at Pro623, Pro626, Pro629, and Pro632. Position 647 is a 3-hydroxyproline (Pro647). A compositionally biased stretch (low complexity) spans 715 to 731; that stretch reads RPGFNGLPGNPGPQGQK. A compositionally biased stretch (gly residues) spans 758–767; it reads GSIGGPGVPG. A compositionally biased stretch (pro residues) spans 784–802; sequence PGPPGVQGPAGPPGVPGIG. A compositionally biased stretch (gly residues) spans 803 to 817; sequence PPGAMGPPGGQGPPG. Composition is skewed to low complexity over residues 847–875 and 994–1003; these read SQGL…PGFP and DPGLSGTPGS. Residues 1011 to 1020 show a composition bias toward gly residues; sequence GSVGGMGLPG. Residue Pro1214 is modified to 3-hydroxyproline. Over residues 1220-1230 the composition is skewed to low complexity; sequence QPGLPGTPGHP. Pro residues predominate over residues 1247–1258; that stretch reads PGHPGPMGPPGF. Over residues 1290-1299 the composition is skewed to gly residues; sequence GMPGIGGSPG. Low complexity-rich tracts occupy residues 1333–1343, 1368–1391, and 1398–1412; these read DQGVPGPKGLQ, PGLK…SVGL, and PGFD…ETGP. Positions 1413 to 1428 are enriched in pro residues; it reads FGPPGPRGFPGPPGPD. Position 1424 is a 3-hydroxyproline (Pro1424). One can recognise a Collagen IV NC1 domain in the interval 1445-1669; that stretch reads GFLVTRHSQT…SRCQVCMRRT (225 aa). 6 cysteine pairs are disulfide-bonded: Cys1460-Cys1551, Cys1493-Cys1548, Cys1505-Cys1511, Cys1570-Cys1665, Cys1604-Cys1662, and Cys1616-Cys1622. Residue Met1533 forms an S-Lysyl-methionine sulfilimine (Met-Lys) (interchain with K-1651) linkage. Lys1651 participates in a covalent cross-link: S-Lysyl-methionine sulfilimine (Lys-Met) (interchain with M-1533).

Belongs to the type IV collagen family. As to quaternary structure, there are six type IV collagen isoforms, alpha 1(IV)-alpha 6(IV), each of which can form a triple helix structure with 2 other chains to generate type IV collagen network. Interacts with EFEMP2. Lysines at the third position of the tripeptide repeating unit (G-X-Y) are hydroxylated. The modified lysines can be O-glycosylated. In terms of processing, contains 4-hydroxyproline. Prolines at the third position of the tripeptide repeating unit (G-X-Y) are hydroxylated in some or all of the chains. Post-translationally, contains 3-hydroxyproline. This modification occurs on the first proline residue in the sequence motif Gly-Pro-Hyp, where Hyp is 4-hydroxyproline. Type IV collagens contain numerous cysteine residues which are involved in inter- and intramolecular disulfide bonding. 12 of these, located in the NC1 domain, are conserved in all known type IV collagens. In terms of processing, the trimeric structure of the NC1 domains is stabilized by covalent bonds (sulfilimine cross-links) between Lys and Met residues. These cross-links are important for the mechanical stability of the basement membrane. Sulfilimine cross-link is catalyzed by PXDN. Post-translationally, proteolytic processing produces the C-terminal NC1 peptide, arresten. As to expression, detected in the basement membrane of the cornea (at protein level).

It is found in the secreted. Its subcellular location is the extracellular space. The protein resides in the extracellular matrix. The protein localises to the basement membrane. Its function is as follows. Type IV collagen is the major structural component of glomerular basement membranes (GBM), forming a 'chicken-wire' meshwork together with laminins, proteoglycans and entactin/nidogen. Arresten, comprising the C-terminal NC1 domain, inhibits angiogenesis and tumor formation. The C-terminal half is found to possess the anti-angiogenic activity. Specifically inhibits endothelial cell proliferation, migration and tube formation. In Mus musculus (Mouse), this protein is Collagen alpha-1(IV) chain.